We begin with the raw amino-acid sequence, 1985 residues long: Voltage-dependent L-type calcium channel subunit alpha-1F (1985 aa).

Basic and acidic residues predominate over residues 1–11 (MSESEVGKDTT). Residues 1–56 (MSESEVGKDTTPEPSPANGTGPGPEWGLCPGPPTVGTDTSGASGLGTPRRRTQHNK) form a disordered region. At 1 to 92 (MSESEVGKDT…RSCISIVEWK (92 aa)) the chain is on the cytoplasmic side. An I repeat occupies 79 to 375 (NPIRRSCISI…LVLGVLSGEF (297 aa)). Residues 93–111 (PFDILILLTIFANCVALGV) traverse the membrane as a helical segment. Over 112–129 (YIPFPEDDSNTANHNLEQ) the chain is Extracellular. The helical transmembrane segment at 130–149 (VEYVFLVIFTVETVLKIVAY) threads the bilayer. The Cytoplasmic segment spans residues 150–161 (GLVLHPSAYIRN). The chain crosses the membrane as a helical span at residues 162-180 (GWNLLDFIIVVVGLFSVLL). At 181–201 (EQGPGRPGDAPHTGGKPGGFD) the chain is on the extracellular side. Residues 202-220 (VKALRAFRVLRPLRLVSGV) traverse the membrane as a helical segment. Residues 221–239 (PSLHIVVNSIMKALVPLLH) lie on the Cytoplasmic side of the membrane. The helical transmembrane segment at 240–259 (IALLVLFVIIIYAIIGLELF) threads the bilayer. Topologically, residues 260-347 (LGRMHKTCYF…WMQDAMGYEL (88 aa)) are extracellular. Asparagine 295 is a glycosylation site (N-linked (GlcNAc...) asparagine). Residue glutamate 330 participates in Ca(2+) binding. A helical membrane pass occupies residues 348 to 372 (PWVYFVSLVIFGSFFVLNLVLGVLS). The Cytoplasmic segment spans residues 373 to 529 (GEFSKEREKA…ARCRRAVKSN (157 aa)). The tract at residues 395–412 (QQMEEDLRGYLDWITQAE) is binding to the beta subunit. The span at 455 to 469 (SHSTRSTHSTSSHAS) shows a compositional bias: low complexity. A disordered region spans residues 455-490 (SHSTRSTHSTSSHASLPASDTGSMTDTPGDEDEEEG). The stretch at 515–761 (NRGLRARCRR…VFLAIAVDNL (247 aa)) is one II repeat. A helical membrane pass occupies residues 530-549 (ACYWAVLLLVFLNTLTIASE). Over 550–564 (HHGQPLWLTQTQEYA) the chain is Extracellular. Residues 565–583 (NKVLLCLFTVEMLLKLYGL) traverse the membrane as a helical segment. Topologically, residues 584 to 591 (GPSVYVAS) are cytoplasmic. The helical transmembrane segment at 592-610 (FFNRFDCFVVCGGILETTL) threads the bilayer. Residues 611 to 620 (VEVGAMQPLG) are Extracellular-facing. A helical membrane pass occupies residues 621–639 (ISVLRCVRLLRIFKVTRHW). Topologically, residues 640–658 (ASLSNLVASLLNSMKSIAS) are cytoplasmic. Residues 659 to 679 (LLLLLFLFIIIFSLLGMQLFG) form a helical membrane-spanning segment. Residues 680 to 733 (GKFNFDQTHTKRSTFDTFPQALLTVFQILTGEDWNVVMYDGIMAYGGPFFPGML) are Extracellular-facing. Glutamate 711 lines the Ca(2+) pocket. Residues 734–758 (VCVYFIILFICGNYILLNVFLAIAV) traverse the membrane as a helical segment. Over 759–876 (DNLASGDAGT…KACHTLIHHH (118 aa)) the chain is Cytoplasmic. Positions 766-834 (AGTAKDKGRE…EEEEENGAGH (69 aa)) are disordered. Residues 768–787 (TAKDKGREKSSEGNPPKENK) are compositionally biased toward basic and acidic residues. Over residues 810-830 (MEEEEEEEEEEEEEEEEEEEN) the composition is skewed to acidic residues. Residues 858–1140 (CLSQTNPLRK…FFMMNIFVGF (283 aa)) form an III repeat. A helical membrane pass occupies residues 877-895 (IFTSLILVFIILSSVSLAA). Topologically, residues 896–911 (EDPIRAHSFRNHILGY) are extracellular. The chain crosses the membrane as a helical span at residues 912 to 931 (FDYAFTSIFTVEILLKMTVF). The Cytoplasmic segment spans residues 932 to 943 (GAFLHRGSFCRS). Residues 944-962 (WFNLLDLLVVSVSLISFGI) form a helical membrane-spanning segment. Residues 963–968 (HSSAIS) lie on the Extracellular side of the membrane. A helical membrane pass occupies residues 969–988 (VVKILRVLRVLRPLRAINRA). Topologically, residues 989–1007 (KGLKHVVQCVFVAIRTIGN) are cytoplasmic. A helical membrane pass occupies residues 1008-1027 (IMIVTTLLQFMFACIGVQLF). Topologically, residues 1028 to 1117 (KGKFYSCTDE…EGPIYNYHVE (90 aa)) are extracellular. The interval 1065-1155 (RLWVNSDFNF…RAQGEQEYQN (91 aa)) is dihydropyridine binding. Glutamate 1091 serves as a coordination point for Ca(2+). The chain crosses the membrane as a helical span at residues 1118–1138 (ISVFFIVYIIIIAFFMMNIFV). The Cytoplasmic portion of the chain corresponds to 1139-1195 (GFVIITFRAQGEQEYQNCELDKNQRQCVEYALKAQPLRRYIPKNPHQYRVWATVNSR). An IV repeat occupies 1182–1449 (NPHQYRVWAT…LFVAVIMDNF (268 aa)). The chain crosses the membrane as a helical span at residues 1196–1214 (AFEYLMFLLILLNTVALAM). Residues 1215-1229 (QHYEQTAPFNYAMDI) are Extracellular-facing. A helical transmembrane segment spans residues 1230–1249 (LNMVFTGLFTIEMVLKIIAF). Residues 1250–1256 (KPKHYFA) lie on the Cytoplasmic side of the membrane. Residues 1257–1278 (DAWNTFDALIVVGSVVDIAVTE) form a helical membrane-spanning segment. The Extracellular segment spans residues 1279–1295 (VNNGGHLGESSEDTSRI). A helical transmembrane segment spans residues 1296–1315 (SITFFRLFRVMRLVKLLSKG). Residues 1316-1334 (EGIRTLLWTFIKSFQALPY) lie on the Cytoplasmic side of the membrane. A helical transmembrane segment spans residues 1335–1354 (VALLIAMIFFIYAVIGMQMF). At 1355 to 1421 (GLVALQDGTQ…GEEFTCGSSF (67 aa)) the chain is on the extracellular side. The segment at 1402 to 1468 (RCDPESDFGP…LGPHHLDEFK (67 aa)) is dihydropyridine binding. The tract at residues 1414-1457 (EFTCGSSFAIVYFISFFMLCAFLIINLFVAVIMDNFDYLTRDWS) is phenylalkylamine binding. Residues 1422–1446 (AIVYFISFFMLCAFLIINLFVAVIM) form a helical membrane-spanning segment. Residues 1447-1982 (DNFDYLTRDW…EDLGDEMACV (536 aa)) are Cytoplasmic-facing. 2 disordered regions span residues 1643 to 1729 (VTEE…PHRR) and 1746 to 1778 (LKGT…SFEP). A compositionally biased stretch (acidic residues) spans 1644-1665 (TEEEEEEEEAVGQEAEEEEAEN). 2 stretches are compositionally biased toward polar residues: residues 1675-1687 (DSQP…SRIS) and 1713-1724 (NSRQPSVIQAGS). Residues 1767 to 1776 (DLDRAGRDSF) are compositionally biased toward basic and acidic residues.

It belongs to the calcium channel alpha-1 subunit (TC 1.A.1.11) family. CACNA1F subfamily. Voltage-dependent calcium channels are multisubunit complexes, consisting of alpha-1, alpha-2, beta and delta subunits in a 1:1:1:1 ratio. The channel activity is directed by the pore-forming and voltage-sensitive alpha-1 subunit. In many cases, this subunit is sufficient to generate voltage-sensitive calcium channel activity. The auxiliary subunits beta and alpha-2/delta linked by a disulfide bridge regulate the channel activity. Interacts (via IQ domain) with CABP4; in a calcium independent manner. Expressed in the inner and outer nuclear layers and the genglion cell layer of the retina.

The protein resides in the membrane. The catalysed reaction is Ca(2+)(in) = Ca(2+)(out). Voltage-sensitive calcium channels (VSCC) mediate the entry of calcium ions into excitable cells and are also involved in a variety of calcium-dependent processes, including muscle contraction, hormone or neurotransmitter release, gene expression, cell motility, cell division and cell death. The isoform alpha-1F gives rise to L-type calcium currents. Long-lasting (L-type) calcium channels belong to the 'high-voltage activated' (HVA) group. They are blocked by dihydropyridines (DHP), phenylalkylamines, and by benzothiazepines. Activates at more negative voltages and does not undergo calcium-dependent inactivation (CDI), due to incoming calcium ions, during depolarization. This Mus musculus (Mouse) protein is Voltage-dependent L-type calcium channel subunit alpha-1F.